Here is a 465-residue protein sequence, read N- to C-terminus: Argininosuccinate lyase (465 aa).

It belongs to the lyase 1 family. Argininosuccinate lyase subfamily.

Its subcellular location is the cytoplasm. The catalysed reaction is 2-(N(omega)-L-arginino)succinate = fumarate + L-arginine. The protein operates within amino-acid biosynthesis; L-arginine biosynthesis; L-arginine from L-ornithine and carbamoyl phosphate: step 3/3. The polypeptide is Argininosuccinate lyase (Clostridium botulinum (strain Alaska E43 / Type E3)).